The primary structure comprises 432 residues: Serine--tRNA ligase (432 aa).

238–240 (TAE) contacts L-serine. 269 to 271 (RSE) contacts ATP. Glutamate 292 serves as a coordination point for L-serine. Residue 356-359 (EVSS) participates in ATP binding. Position 392 (serine 392) interacts with L-serine.

Belongs to the class-II aminoacyl-tRNA synthetase family. Type-1 seryl-tRNA synthetase subfamily. In terms of assembly, homodimer. The tRNA molecule binds across the dimer.

It is found in the cytoplasm. The catalysed reaction is tRNA(Ser) + L-serine + ATP = L-seryl-tRNA(Ser) + AMP + diphosphate + H(+). It carries out the reaction tRNA(Sec) + L-serine + ATP = L-seryl-tRNA(Sec) + AMP + diphosphate + H(+). It participates in aminoacyl-tRNA biosynthesis; selenocysteinyl-tRNA(Sec) biosynthesis; L-seryl-tRNA(Sec) from L-serine and tRNA(Sec): step 1/1. Catalyzes the attachment of serine to tRNA(Ser). Is also able to aminoacylate tRNA(Sec) with serine, to form the misacylated tRNA L-seryl-tRNA(Sec), which will be further converted into selenocysteinyl-tRNA(Sec). In Buchnera aphidicola subsp. Baizongia pistaciae (strain Bp), this protein is Serine--tRNA ligase.